Consider the following 337-residue polypeptide: MQSIPIKNVGESRLVDPFQRQYYYLRLSITDQCNFRCTYCLPDGYQPEANKPSFLTLKEITHLAQAFAEMGTEKIRLTGGEPTLRKDFISIAESITNIDGIRQLAVTTNGYRMAKDVADWKKAGITSINVSVDSLDPKMFHQITGINKFDDVMRGIDRAFEVGYNKVKVNSVLMKNLNDKEFEQFLAWVKDRPIQMRFIELMQTGEMDSFFDKFHLSGQVLADKLLKNGWTLQHKSHTDGPAKVFTHPDYAGEIGLIMPYEKNFCASCNRLRVSAKGKLHLCLFGEEGIELRDLLQSHEQQGILQARIFAALQGKREHHYLHIGDTGVRNHLASIGG.

The Radical SAM core domain occupies P17 to K243. Residue R26 coordinates GTP. [4Fe-4S] cluster is bound by residues C33 and C37. Y39 is an S-adenosyl-L-methionine binding site. C40 provides a ligand contact to [4Fe-4S] cluster. Residue R76 participates in GTP binding. G80 serves as a coordination point for S-adenosyl-L-methionine. A GTP-binding site is contributed by T107. Residue S131 participates in S-adenosyl-L-methionine binding. K168 contributes to the GTP binding site. M202 lines the S-adenosyl-L-methionine pocket. [4Fe-4S] cluster contacts are provided by C265 and C268. R270 to R272 contributes to the GTP binding site. A [4Fe-4S] cluster-binding site is contributed by C282.

Belongs to the radical SAM superfamily. MoaA family. In terms of assembly, monomer and homodimer. [4Fe-4S] cluster is required as a cofactor.

It catalyses the reaction GTP + AH2 + S-adenosyl-L-methionine = (8S)-3',8-cyclo-7,8-dihydroguanosine 5'-triphosphate + 5'-deoxyadenosine + L-methionine + A + H(+). The protein operates within cofactor biosynthesis; molybdopterin biosynthesis. Its function is as follows. Catalyzes the cyclization of GTP to (8S)-3',8-cyclo-7,8-dihydroguanosine 5'-triphosphate. This is GTP 3',8-cyclase from Haemophilus influenzae (strain ATCC 51907 / DSM 11121 / KW20 / Rd).